Reading from the N-terminus, the 256-residue chain is Hydroxyacylglutathione hydrolase (256 aa).

Zn(2+)-binding residues include His-54, His-56, Asp-58, His-59, His-113, Asp-136, and His-174.

It belongs to the metallo-beta-lactamase superfamily. Glyoxalase II family. Monomer. Zn(2+) serves as cofactor.

It catalyses the reaction an S-(2-hydroxyacyl)glutathione + H2O = a 2-hydroxy carboxylate + glutathione + H(+). It participates in secondary metabolite metabolism; methylglyoxal degradation; (R)-lactate from methylglyoxal: step 2/2. Thiolesterase that catalyzes the hydrolysis of S-D-lactoyl-glutathione to form glutathione and D-lactic acid. This Cyanothece sp. (strain PCC 7425 / ATCC 29141) protein is Hydroxyacylglutathione hydrolase.